A 221-amino-acid polypeptide reads, in one-letter code: ATP phosphoribosyltransferase (221 aa).

The protein belongs to the ATP phosphoribosyltransferase family. Short subfamily. Heteromultimer composed of HisG and HisZ subunits.

Its subcellular location is the cytoplasm. The enzyme catalyses 1-(5-phospho-beta-D-ribosyl)-ATP + diphosphate = 5-phospho-alpha-D-ribose 1-diphosphate + ATP. The protein operates within amino-acid biosynthesis; L-histidine biosynthesis; L-histidine from 5-phospho-alpha-D-ribose 1-diphosphate: step 1/9. In terms of biological role, catalyzes the condensation of ATP and 5-phosphoribose 1-diphosphate to form N'-(5'-phosphoribosyl)-ATP (PR-ATP). Has a crucial role in the pathway because the rate of histidine biosynthesis seems to be controlled primarily by regulation of HisG enzymatic activity. The chain is ATP phosphoribosyltransferase from Symbiobacterium thermophilum (strain DSM 24528 / JCM 14929 / IAM 14863 / T).